Reading from the N-terminus, the 417-residue chain is Gamma-glutamyl phosphate reductase (417 aa).

It belongs to the gamma-glutamyl phosphate reductase family.

It localises to the cytoplasm. It catalyses the reaction L-glutamate 5-semialdehyde + phosphate + NADP(+) = L-glutamyl 5-phosphate + NADPH + H(+). Its pathway is amino-acid biosynthesis; L-proline biosynthesis; L-glutamate 5-semialdehyde from L-glutamate: step 2/2. Its function is as follows. Catalyzes the NADPH-dependent reduction of L-glutamate 5-phosphate into L-glutamate 5-semialdehyde and phosphate. The product spontaneously undergoes cyclization to form 1-pyrroline-5-carboxylate. This chain is Gamma-glutamyl phosphate reductase, found in Escherichia coli (strain K12 / MC4100 / BW2952).